The chain runs to 166 residues: Phospholipase A2 inhibitor A4/A5 (166 aa).

Residues 1-19 (MRLILLSGLLLLGTFLVNG) form the signal peptide. The 116-residue stretch at 46–161 (LFHAFLTVHK…CDDNLLVVCE (116 aa)) folds into the C-type lectin domain. Cystine bridges form between C83–C160 and C138–C152. N122 carries an N-linked (GlcNAc...) asparagine glycan.

It belongs to the alpha-type phospholipase A2 inhibitor family. Homotrimer; non-covalently linked. As to expression, expressed by the liver.

It is found in the secreted. In terms of biological role, this phospholipase A2 inhibitor binds directly phospholipase A2 in the presence or absence of calcium. The polypeptide is Phospholipase A2 inhibitor A4/A5 (Crotalus durissus terrificus (South American rattlesnake)).